The chain runs to 564 residues: Proline--tRNA ligase (564 aa).

This sequence belongs to the class-II aminoacyl-tRNA synthetase family. ProS type 1 subfamily. In terms of assembly, homodimer.

The protein resides in the cytoplasm. It carries out the reaction tRNA(Pro) + L-proline + ATP = L-prolyl-tRNA(Pro) + AMP + diphosphate. Catalyzes the attachment of proline to tRNA(Pro) in a two-step reaction: proline is first activated by ATP to form Pro-AMP and then transferred to the acceptor end of tRNA(Pro). As ProRS can inadvertently accommodate and process non-cognate amino acids such as alanine and cysteine, to avoid such errors it has two additional distinct editing activities against alanine. One activity is designated as 'pretransfer' editing and involves the tRNA(Pro)-independent hydrolysis of activated Ala-AMP. The other activity is designated 'posttransfer' editing and involves deacylation of mischarged Ala-tRNA(Pro). The misacylated Cys-tRNA(Pro) is not edited by ProRS. The polypeptide is Proline--tRNA ligase (Sulfurihydrogenibium sp. (strain YO3AOP1)).